Here is a 205-residue protein sequence, read N- to C-terminus: Ribonuclease HII (205 aa).

One can recognise an RNase H type-2 domain in the interval 16 to 205 (VSEVGIDEVG…KSFLKKSKLI (190 aa)). Asp22, Glu23, and Asp118 together coordinate a divalent metal cation.

It belongs to the RNase HII family. It depends on Mn(2+) as a cofactor. Mg(2+) serves as cofactor.

The protein localises to the cytoplasm. The catalysed reaction is Endonucleolytic cleavage to 5'-phosphomonoester.. In terms of biological role, endonuclease that specifically degrades the RNA of RNA-DNA hybrids. This Prochlorococcus marinus (strain AS9601) protein is Ribonuclease HII.